A 475-amino-acid chain; its full sequence is Retrotransposon Gag-like protein 3 (475 aa).

2 stretches are compositionally biased toward basic and acidic residues: residues 51-66 (LLRK…KLPE) and 78-87 (KTPEFKEPQK). Disordered regions lie at residues 51 to 101 (LLRK…EPPA), 152 to 173 (EPKN…APEY), and 397 to 421 (DPNP…ENQP). The CCHC-type zinc finger occupies 443–462 (RLCLYCGYPGHFARDCPVKP).

The protein resides in the nucleus. May function as a transcriptional regulator. Plays a role in postnatal myogenesis, may be involved in the regulation of satellite cells self-renewal. The chain is Retrotransposon Gag-like protein 3 from Homo sapiens (Human).